Consider the following 732-residue polypeptide: Ubiquitin carboxyl-terminal hydrolase 21 (732 aa).

Residues 1-10 (MAEFSDPPPS) show a composition bias toward pro residues. The segment at 1–111 (MAEFSDPPPS…ISPVSNNNHL (111 aa)) is disordered. Polar residues-rich tracts occupy residues 11 to 31 (NLSSSHKLTKPNQTLDESSPT) and 38 to 53 (VTNSLSLSSPIRQIQA). The span at 55–69 (SPAKPDGSSSSPPDK) shows a compositional bias: low complexity. The region spanning 163–469 (AGLYNSGNTC…PAYILFYARE (307 aa)) is the USP domain. Residue Cys-172 is the Nucleophile of the active site. His-428 functions as the Proton acceptor in the catalytic mechanism. The interval 534–732 (KEEVFHSAES…SSNMRRSIKL (199 aa)) is disordered. A compositionally biased stretch (low complexity) spans 540–551 (SAESSNNEDSSA). Positions 583-609 (AYIDKSEKPFAETSQPKEPKPFADRAS) are enriched in basic and acidic residues. Positions 719 to 732 (KKKKSSNMRRSIKL) are enriched in basic residues.

This sequence belongs to the peptidase C19 family.

The catalysed reaction is Thiol-dependent hydrolysis of ester, thioester, amide, peptide and isopeptide bonds formed by the C-terminal Gly of ubiquitin (a 76-residue protein attached to proteins as an intracellular targeting signal).. Recognizes and hydrolyzes the peptide bond at the C-terminal Gly of ubiquitin. Involved in the processing of poly-ubiquitin precursors as well as that of ubiquitinated proteins. The sequence is that of Ubiquitin carboxyl-terminal hydrolase 21 (UBP21) from Arabidopsis thaliana (Mouse-ear cress).